The sequence spans 120 residues: Large ribosomal subunit protein uL24 (120 aa).

The protein belongs to the universal ribosomal protein uL24 family. Part of the 50S ribosomal subunit.

In terms of biological role, one of two assembly initiator proteins, it binds directly to the 5'-end of the 23S rRNA, where it nucleates assembly of the 50S subunit. Located at the polypeptide exit tunnel on the outside of the subunit. In Archaeoglobus fulgidus (strain ATCC 49558 / DSM 4304 / JCM 9628 / NBRC 100126 / VC-16), this protein is Large ribosomal subunit protein uL24.